The sequence spans 248 residues: MFSLALRARASGLTAQWGRHARNLHKTAVQNGAGGALFVHRDTPENNPDTPFDFTPENYERIEAIVRNYPEGHRAAAVLPVLDLAQRQNGWLPISAMNKVAEVLQVPPMRVYEVATFYTMYNRKPVGKYHIQVCTTTPCMLRDSDSILETLQRKLGIKVGETTPDKLFTLIEVECLGACVNAPMVQINDDYYEDLTPKDIEEIIDELRAGKVPKPGPRSGRFCCEPAGGLTSLTEPPKGPGFGVQAGL.

Residues 1 to 31 (MFSLALRARASGLTAQWGRHARNLHKTAVQN) constitute a mitochondrion transit peptide. The [2Fe-2S] cluster site is built by cysteine 134, cysteine 139, cysteine 175, and cysteine 179. At tyrosine 192 the chain carries Phosphotyrosine; by SRC. The tract at residues 229-248 (GLTSLTEPPKGPGFGVQAGL) is disordered.

The protein belongs to the complex I 24 kDa subunit family. Core subunit of respiratory chain NADH dehydrogenase (Complex I) which is composed of 45 different subunits. This is a component of the flavoprotein-sulfur (FP) fragment of the enzyme. [2Fe-2S] cluster serves as cofactor.

Its subcellular location is the mitochondrion inner membrane. It carries out the reaction a ubiquinone + NADH + 5 H(+)(in) = a ubiquinol + NAD(+) + 4 H(+)(out). Its function is as follows. Core subunit of the mitochondrial membrane respiratory chain NADH dehydrogenase (Complex I) which catalyzes electron transfer from NADH through the respiratory chain, using ubiquinone as an electron acceptor. Parts of the peripheral arm of the enzyme, where the electrons from NADH are accepted by flavin mononucleotide (FMN) and then passed along a chain of iron-sulfur clusters by electron tunnelling to the final acceptor ubiquinone. Contains one iron-sulfur cluster. This chain is NADH dehydrogenase [ubiquinone] flavoprotein 2, mitochondrial, found in Rattus norvegicus (Rat).